The sequence spans 432 residues: Lysosomal acid phosphatase (432 aa).

The signal sequence occupies residues 1 to 32; it reads MADGSCLGSGPQLGLIALLVVLLFSAVPLAQS. Over 33–384 the chain is Lumenal; it reads RELRFVTLVY…TTSFIMTEET (352 aa). The Nucleophile role is filled by histidine 44. Asparagine 94, asparagine 135, asparagine 179, asparagine 193, and asparagine 269 each carry an N-linked (GlcNAc...) asparagine glycan. 3 cysteine pairs are disulfide-bonded: cysteine 161-cysteine 373, cysteine 214-cysteine 313, and cysteine 348-cysteine 352. Catalysis depends on aspartate 290, which acts as the Proton donor. 2 N-linked (GlcNAc...) asparagine glycosylation sites follow: asparagine 325 and asparagine 334. A helical membrane pass occupies residues 385-405; sequence IIGLTIGAIALFIIIVVLMLL. Residues 406-432 are Cytoplasmic-facing; that stretch reads SCNEPKDDGYQHVSDEGDDHETKGLAM.

This sequence belongs to the histidine acid phosphatase family. The membrane-bound form is converted to the soluble form by sequential proteolytic processing. First, the C-terminal cytoplasmic tail is removed. Cleavage by a lysosomal protease releases the soluble form in the lysosome lumen.

It localises to the lysosome membrane. The protein resides in the lysosome lumen. It catalyses the reaction a phosphate monoester + H2O = an alcohol + phosphate. The protein is Lysosomal acid phosphatase (acp2) of Xenopus laevis (African clawed frog).